A 125-amino-acid chain; its full sequence is Small ribosomal subunit protein eS8 (125 aa).

A compositionally biased stretch (polar residues) spans 1 to 11; that stretch reads MAISQGKSTRL. A disordered region spans residues 1–38; sequence MAISQGKSTRLPSGARNVANRGKRKAELGRDPAETRVD. Residues 25-38 are compositionally biased toward basic and acidic residues; sequence KAELGRDPAETRVD.

This sequence belongs to the eukaryotic ribosomal protein eS8 family. Part of the 30S ribosomal subunit.

The sequence is that of Small ribosomal subunit protein eS8 from Methanobrevibacter smithii (strain ATCC 35061 / DSM 861 / OCM 144 / PS).